Reading from the N-terminus, the 192-residue chain is Large ribosomal subunit protein uL10 (192 aa).

Belongs to the universal ribosomal protein uL10 family. In terms of assembly, part of the ribosomal stalk of the 50S ribosomal subunit. The N-terminus interacts with L11 and the large rRNA to form the base of the stalk. The C-terminus forms an elongated spine to which L12 dimers bind in a sequential fashion forming a multimeric L10(L12)X complex.

Its function is as follows. Forms part of the ribosomal stalk, playing a central role in the interaction of the ribosome with GTP-bound translation factors. This is Large ribosomal subunit protein uL10 from Gloeobacter violaceus (strain ATCC 29082 / PCC 7421).